The chain runs to 288 residues: Ankyrin repeat and SOCS box protein 8 (288 aa).

Residue serine 17 is modified to Phosphoserine. ANK repeat units follow at residues 52–81 (GTLKPLHCACMVSDADCVELLLEKGAEVNA), 85–113 (YNRTALHYAAEKDEACVEVLLEYGANPNA), 117–146 (NRDTPLHWAAFKNNAECVRALLESGASVNA), and 150–179 (NNDTPLSWAAMKGNLESVSILLDYGAEVRV). One can recognise an SOCS box domain in the interval 235 to 288 (QLCEKLTVLCSAPGTLKTLARYAVRRSLGLQYLPDAVKGLPLPASLKEYLLLLE).

Belongs to the ankyrin SOCS box (ASB) family. Interacts with TBK1; this interaction promotes TBK1 proteasomal degradation. In terms of processing, phosphorylated by TBK1. In terms of tissue distribution, highest level of expression in skeletal muscle. Also expressed in heart, brain, placenta, liver, kidney and pancreas.

The protein resides in the cytoplasm. The protein operates within protein modification; protein ubiquitination. Its function is as follows. May be a substrate-recognition component of a SCF-like ECS (Elongin-Cullin-SOCS-box protein) E3 ubiquitin-protein ligase complex which mediates the ubiquitination and subsequent proteasomal degradation of target proteins. Inhibits IFN-beta production through the IRF3 signaling pathway by targeting TBK1 via 'Lys-48'-linked ubiquitination, leading to its proteasomal degradation. The polypeptide is Ankyrin repeat and SOCS box protein 8 (ASB8) (Homo sapiens (Human)).